A 728-amino-acid polypeptide reads, in one-letter code: tRNA (guanine(27)-N(2))-dimethyltransferase (728 aa).

The segment covering 1-10 (MENMAEEELL) has biased composition (acidic residues). 2 disordered regions span residues 1-78 (MENM…SKRH) and 98-118 (DVDS…SQTC). Threonine 23 bears the Phosphothreonine mark. Pro residues predominate over residues 23-33 (TPAPDSAPVPA). Over residues 34-46 (PAADTALDSAPTP) the composition is skewed to low complexity. Residues 47-61 (DSDPAPALAPAPAPA) are compositionally biased toward pro residues. A Phosphoserine modification is found at serine 63. A compositionally biased stretch (polar residues) spans 101–118 (SASSLNSDNPGTENSQTC). The Nucleolar localization signal motif lies at 132-136 (HKLRR). The C2H2-type zinc-finger motif lies at 181-203 (YHCIICSATITRRTDMLGHVKRH). Residues 224-683 (EILKETDTDI…APLMQFKSIL (460 aa)) enclose the Trm1 methyltransferase domain. 4 residues coordinate S-adenosyl-L-methionine: arginine 257, aspartate 304, aspartate 352, and alanine 353. Cysteine 483, cysteine 486, cysteine 508, and cysteine 510 together coordinate Zn(2+). A Glycyl lysine isopeptide (Lys-Gly) (interchain with G-Cter in SUMO2) cross-link involves residue lysine 580. Serine 607 is modified (phosphoserine). Residues 693–728 (GAQSEGQMPPAAEDTVTDRVEMSVSDKAEASGCRRW) are disordered. Residues 708–721 (VTDRVEMSVSDKAE) show a composition bias toward basic and acidic residues.

This sequence belongs to the class I-like SAM-binding methyltransferase superfamily. Trm1 family. In terms of tissue distribution, expressed in various neuronal structures during embryonic development, including spinal ganglia, trigeminal nerve and ganglion, olfactory and nasopharyngeal epithelium, nuclei of the metencephalon, thalamus and medulla oblongata. Also expressed in lung, esophagus, epiglottis, ependyma, vertebral column, spinal cord and brown adipose tissue. Expression persists in the adult brain with dynamically changing patterns in cortex and cerebellum.

It localises to the nucleus. Its subcellular location is the nucleolus. It carries out the reaction guanosine(27) in tRNA(Tyr) + 2 S-adenosyl-L-methionine = N(2)-dimethylguanosine(27) in tRNA(Tyr) + 2 S-adenosyl-L-homocysteine + 2 H(+). Specifically dimethylates a single guanine residue at position 27 of tRNA(Tyr) using S-adenosyl-L-methionine as donor of the methyl groups. Dimethylation at position 27 of tRNA(Tyr) is required for efficient translation of tyrosine codons. Also required to maintain 3-(3-amino-3-carboxypropyl)uridine (acp3U) in the D-loop of several cytoplasmic tRNAs. May play a role in motor coordination and exploratory behavior. This chain is tRNA (guanine(27)-N(2))-dimethyltransferase, found in Mus musculus (Mouse).